The primary structure comprises 265 residues: Deoxycytidine kinase 2 (265 aa).

Glycine 31–threonine 39 is an ATP binding site. Residues glutamate 56, tyrosine 89, and glutamine 100 each coordinate substrate. The Proton acceptor role is filled by glutamate 130. Substrate is bound by residues arginine 131 and aspartate 136. ATP is bound at residue arginine 191–arginine 195. Residue glutamate 200 coordinates substrate. An ATP-binding site is contributed by glutamate 243–phenylalanine 245.

The protein belongs to the DCK/DGK family. In terms of assembly, homodimer. As to expression, expressed at high levels in adult intestine, spleen, thymus and testis with lower levels in skeletal muscle and eye. In the embryo, expressed at higher levels until day 10 with lower levels in later stages.

Its subcellular location is the nucleus. It carries out the reaction 2'-deoxycytidine + a ribonucleoside 5'-triphosphate = dCMP + a ribonucleoside 5'-diphosphate + H(+). The catalysed reaction is 2'-deoxyguanosine + ATP = dGMP + ADP + H(+). It catalyses the reaction 2'-deoxyadenosine + ATP = dAMP + ADP + H(+). Phosphorylates the deoxyribonucleosides deoxyadenosine, deoxycytidine and deoxyguanosine. Shows highest activity against deoxyguanosine followed by deoxycytidine and then deoxyadenosine. Shows only very minor activity against deoxyuridine and deoxythymidine. The chain is Deoxycytidine kinase 2 from Gallus gallus (Chicken).